The sequence spans 361 residues: MKFQLHCHDHHARRGTLTLAHGMIETPAFMPVGTYGAVKGLSPDELQTLGAEIILGNTFHLWLRPGLEVIEAHGGLHRFMHWDGPILTDSGGFQVFSLGALRKISEEGVRFRSPVNGDTCFLTPEESMRIQRVLNSDIVMIFDECTPYPVDMQIAEDSMQLSLRWAERSKAAHAGNPNALFGIVQGGMYESLRDRSIAGLYNIGFDGYAIGGLSVGEPKLEMQRILSHTAPQLPVDKPRYLMGVGTPEDIVRAVEQGIDMFDCVLPTRNARNGWLYTSQGVLKLRNSRYRLDTSPPDENCDCYTCRHFTRAYLHHLQRTGEMLGARLNSLHNLHYYQRLMSDIRKAIEAGQFEQFACRFSG.

The Proton acceptor role is filled by Asp-89. Residues 89–93 (DSGGF), Asp-143, Gln-185, and Gly-212 contribute to the substrate site. An RNA binding region spans residues 243-249 (GVGTPED). Asp-262 (nucleophile) is an active-site residue. The interval 267–271 (TRNAR) is RNA binding; important for wobble base 34 recognition. Positions 300, 302, 305, and 331 each coordinate Zn(2+).

The protein belongs to the queuine tRNA-ribosyltransferase family. Homodimer. Within each dimer, one monomer is responsible for RNA recognition and catalysis, while the other monomer binds to the replacement base PreQ1. Zn(2+) serves as cofactor.

The catalysed reaction is 7-aminomethyl-7-carbaguanine + guanosine(34) in tRNA = 7-aminomethyl-7-carbaguanosine(34) in tRNA + guanine. The protein operates within tRNA modification; tRNA-queuosine biosynthesis. In terms of biological role, catalyzes the base-exchange of a guanine (G) residue with the queuine precursor 7-aminomethyl-7-deazaguanine (PreQ1) at position 34 (anticodon wobble position) in tRNAs with GU(N) anticodons (tRNA-Asp, -Asn, -His and -Tyr). Catalysis occurs through a double-displacement mechanism. The nucleophile active site attacks the C1' of nucleotide 34 to detach the guanine base from the RNA, forming a covalent enzyme-RNA intermediate. The proton acceptor active site deprotonates the incoming PreQ1, allowing a nucleophilic attack on the C1' of the ribose to form the product. After dissociation, two additional enzymatic reactions on the tRNA convert PreQ1 to queuine (Q), resulting in the hypermodified nucleoside queuosine (7-(((4,5-cis-dihydroxy-2-cyclopenten-1-yl)amino)methyl)-7-deazaguanosine). The sequence is that of Queuine tRNA-ribosyltransferase from Nitrosomonas eutropha (strain DSM 101675 / C91 / Nm57).